The sequence spans 297 residues: E3 ubiquitin-protein ligase RNF212B (297 aa).

Residues 6–40 (CNQCFRKDGAHFFVTSCGHIFCKKCMTLEKCAVCG) form an RING-type zinc finger. Residues 87–136 (LLIAFYKDRITKLEAAVKEAQEMAASQNKELSALRKENGELKKILDILKG) are a coiled coil. 2 disordered regions span residues 152–179 (VGITSPSQSVAPRPSSHHSSQVVSRSSS) and 198–269 (RGLH…ESLP). Residues 163–179 (PRPSSHHSSQVVSRSSS) show a composition bias toward low complexity. Polar residues predominate over residues 206–234 (PGDSYTETPSPASTHSLSYRPSSASSGQG).

As to quaternary structure, homodimer. Autoubiquitinated.

Its subcellular location is the chromosome. The catalysed reaction is S-ubiquitinyl-[E2 ubiquitin-conjugating enzyme]-L-cysteine + [acceptor protein]-L-lysine = [E2 ubiquitin-conjugating enzyme]-L-cysteine + N(6)-ubiquitinyl-[acceptor protein]-L-lysine.. Its pathway is protein modification; protein ubiquitination. Ubiquitin E3 ligase that acts as a crucial factor for crossing-over (CO) formation during meiosis. Essential for normal prophase I progression and for ensuring appropriate CO designation in meiosis. Recruits key components of the cross-over machinery either directly ou indirectly, leading to the activation of the MutL-gamma complex. The function of RNF212B in CO designation is dependent on its catalytic activity. The protein is E3 ubiquitin-protein ligase RNF212B (Rnf212b) of Mus musculus (Mouse).